Reading from the N-terminus, the 146-residue chain is Small nuclear ribonucleoprotein Sm D1 (146 aa).

The Sm domain maps to 2-101; it reads KLVNFLKKLR…IRQIILPDSL (100 aa). Residues 118–146 are disordered; it reads RSGQIANDPSKKRRRDFGAPANKRPRRGL. The Nuclear localization signal motif lies at 128 to 144; sequence KKRRRDFGAPANKRPRR.

Belongs to the snRNP core protein family. Component of the Sm core complex, present in spliceosomal snRNP U1, U2, U4/U6 and U5. The core complex contains SMB1, SMD1, SMD2, SMD3, SME1, SMX3 and SMX2 (Sm proteins B, D1, D2, D3, E, F and G, respectively), and is probably a heptameric ring structure. Belongs to the CWC complex (or CEF1-associated complex), a spliceosome sub-complex reminiscent of a late-stage spliceosome composed of the U2, U5 and U6 snRNAs and at least BUD13, BUD31, BRR2, CDC40, CEF1, CLF1, CUS1, CWC2, CWC15, CWC21, CWC22, CWC23, CWC24, CWC25, CWC27, ECM2, HSH155, IST3, ISY1, LEA1, MSL1, NTC20, PRP8, PRP9, PRP11, PRP19, PRP21, PRP22, PRP45, PRP46, SLU7, SMB1, SMD1, SMD2, SMD3, SMX2, SMX3, SNT309, SNU114, SPP2, SYF1, SYF2, RSE1 and YJU2. Component of the U4/U6-U5 tri-snRNP complex composed of the U4, U6 and U5 snRNAs and at least PRP3, PRP4, PRP6, PRP8, PRP18, PRP31, PRP38, SNU13, SNU23, SNU66, SNU114, SPP381, SMB1, SMD1, SMD2, SMD3, SMX2, SMX3, LSM2, LSM3, LSM4, LSM5, LSM6, LSM7, LSM8, BRR2 and DIB1.

The protein localises to the nucleus. The protein resides in the cytoplasm. In terms of biological role, lays a role in pre-mRNA splicing as a core component of the spliceosomal U1, U2, U4 and U5 small nuclear ribonucleoproteins (snRNPs), the building blocks of the spliceosome. Also binds telomerase RNA and is required for its accumulation. The sequence is that of Small nuclear ribonucleoprotein Sm D1 (SMD1) from Saccharomyces cerevisiae (strain ATCC 204508 / S288c) (Baker's yeast).